We begin with the raw amino-acid sequence, 221 residues long: uncharacterized protein (221 aa).

4 helical membrane-spanning segments follow: residues Thr41 to Ile63, Ala78 to Ser100, Ile141 to Leu163, and Leu178 to Phe200.

It is found in the cell membrane. This is an uncharacterized protein from Archaeoglobus fulgidus (strain ATCC 49558 / DSM 4304 / JCM 9628 / NBRC 100126 / VC-16).